The sequence spans 233 residues: Large ribosomal subunit protein uL1 (233 aa).

Belongs to the universal ribosomal protein uL1 family. Part of the 50S ribosomal subunit.

Functionally, binds directly to 23S rRNA. The L1 stalk is quite mobile in the ribosome, and is involved in E site tRNA release. In terms of biological role, protein L1 is also a translational repressor protein, it controls the translation of the L11 operon by binding to its mRNA. This chain is Large ribosomal subunit protein uL1, found in Shewanella amazonensis (strain ATCC BAA-1098 / SB2B).